The sequence spans 569 residues: Urease subunit alpha (569 aa).

The 439-residue stretch at 131 to 569 (GGMDAHIHYI…LPMAQRYFLF (439 aa)) folds into the Urease domain. Residues His136, His138, and Lys218 each contribute to the Ni(2+) site. Lys218 is modified (N6-carboxylysine). His220 lines the substrate pocket. The Ni(2+) site is built by His247 and His273. Catalysis depends on His321, which acts as the Proton donor. Asp361 contacts Ni(2+).

Belongs to the metallo-dependent hydrolases superfamily. Urease alpha subunit family. In terms of assembly, heterotrimer of UreA (gamma), UreB (beta) and UreC (alpha) subunits. Three heterotrimers associate to form the active enzyme. It depends on Ni cation as a cofactor. Carboxylation allows a single lysine to coordinate two nickel ions.

The protein localises to the cytoplasm. The catalysed reaction is urea + 2 H2O + H(+) = hydrogencarbonate + 2 NH4(+). The protein operates within nitrogen metabolism; urea degradation; CO(2) and NH(3) from urea (urease route): step 1/1. The polypeptide is Urease subunit alpha (Agrobacterium fabrum (strain C58 / ATCC 33970) (Agrobacterium tumefaciens (strain C58))).